The primary structure comprises 1171 residues: DNA-directed RNA polymerase subunit beta (1171 aa).

Belongs to the RNA polymerase beta chain family. In terms of assembly, the RNAP catalytic core consists of 2 alpha, 1 beta, 1 beta' and 1 omega subunit. When a sigma factor is associated with the core the holoenzyme is formed, which can initiate transcription.

It catalyses the reaction RNA(n) + a ribonucleoside 5'-triphosphate = RNA(n+1) + diphosphate. Its function is as follows. DNA-dependent RNA polymerase catalyzes the transcription of DNA into RNA using the four ribonucleoside triphosphates as substrates. The chain is DNA-directed RNA polymerase subunit beta from Kineococcus radiotolerans (strain ATCC BAA-149 / DSM 14245 / SRS30216).